The following is a 236-amino-acid chain: Small ribosomal subunit protein uS2c (236 aa).

The protein belongs to the universal ribosomal protein uS2 family.

Its subcellular location is the plastid. The protein localises to the chloroplast. This is Small ribosomal subunit protein uS2c (rps2) from Olimarabidopsis pumila (Dwarf rocket).